The following is a 64-amino-acid chain: Protein YnhH (64 aa).

In Escherichia coli (strain K12), this protein is Protein YnhH.